The primary structure comprises 221 residues: Max dimerization protein 1 (221 aa).

A Nuclear localization signal motif is present at residues 21–49 (RREREAEHGYASMLPYNNKDRDALKRRNK). 2 disordered regions span residues 30–68 (YASM…EKNR) and 173–204 (TGDL…YSST). One can recognise a bHLH domain in the interval 56 to 108 (SSRSTHNEMEKNRRAHLRLCLEKLKGLVPLGPESSRHTTLSLLTKAKLHIKKL). The span at 175–184 (DLDWSSSSVS) shows a compositional bias: low complexity. The span at 191–204 (SMQSLGSDEGYSST) shows a compositional bias: polar residues.

As to quaternary structure, heterodimer with MAX; the interaction is required for DNA-binding. DNA binding requires dimerization with another bHLH protein; does not form homodimers, and does not bind to DNA in the absence of MAX in vitro. Interacts with RNF17. Post-translationally, ubiquitinated by BIRC2/c-IAP1, leading to its subsequent degradation by the proteasome.

It is found in the nucleus. Component of a transcriptional repressor complex together with MAX. In complex with MAX binds to the core DNA sequence 5'-CAC[GA]TG-3'. Antagonizes MYC transcriptional activity by competing with MYC for MAX binding. Binds to the TERT promoter and represses telomerase expression, possibly by interfering with MYC binding. The protein is Max dimerization protein 1 (MXD1) of Homo sapiens (Human).